The following is a 311-amino-acid chain: p-hydroxybenzoic acid efflux pump subunit AaeA (311 aa).

A helical membrane pass occupies residues 11–31; the sequence is IGITLLVVLLAVIAIFKVWAF.

The protein belongs to the membrane fusion protein (MFP) (TC 8.A.1) family.

The protein localises to the cell inner membrane. Its function is as follows. Forms an efflux pump with AaeB. The sequence is that of p-hydroxybenzoic acid efflux pump subunit AaeA from Yersinia enterocolitica serotype O:8 / biotype 1B (strain NCTC 13174 / 8081).